The following is a 698-amino-acid chain: Polyribonucleotide nucleotidyltransferase (698 aa).

Asp-488 and Asp-494 together coordinate Mg(2+). One can recognise a KH domain in the interval Pro-555–Ile-614. The 69-residue stretch at Gly-624 to Lys-692 folds into the S1 motif domain.

This sequence belongs to the polyribonucleotide nucleotidyltransferase family. In terms of assembly, component of the RNA degradosome, which is a multiprotein complex involved in RNA processing and mRNA degradation. Requires Mg(2+) as cofactor.

The protein localises to the cytoplasm. The enzyme catalyses RNA(n+1) + phosphate = RNA(n) + a ribonucleoside 5'-diphosphate. Functionally, involved in mRNA degradation. Catalyzes the phosphorolysis of single-stranded polyribonucleotides processively in the 3'- to 5'-direction. The polypeptide is Polyribonucleotide nucleotidyltransferase (Alkalilimnicola ehrlichii (strain ATCC BAA-1101 / DSM 17681 / MLHE-1)).